We begin with the raw amino-acid sequence, 328 residues long: MSLQNLTRFPRLELIGAPTPLEYLPRLSDHLGREIFIKRDDTTPLAMGGNKLRKLEFLAADALREGADTLITAGAIQSNHVRQTAAVAAKLGLHCVALLENPIGTGAENYLSNGNRLLLDLFNTQVEMCDALTNPAEQLDELATRIEAQGYRPYVIPVGGSNALGALGYVESALEIAQQCEGAVEISSVVVASGSAGTHAGLAVGLEQLMPQAELIGVTVSRSVADQLPKVVALQQAVANSLELQAKADITLWDDYFAPGYGTPNEEGMAAVKLLAQLEGILLDPVYTGKAMAGLIDGITQKRFKDEGPILFVHTGGAPALFAYHPHL.

Lys51 bears the N6-(pyridoxal phosphate)lysine mark.

Belongs to the ACC deaminase/D-cysteine desulfhydrase family. Homodimer. It depends on pyridoxal 5'-phosphate as a cofactor.

It catalyses the reaction D-cysteine + H2O = hydrogen sulfide + pyruvate + NH4(+) + H(+). Catalyzes the alpha,beta-elimination reaction of D-cysteine and of several D-cysteine derivatives. It could be a defense mechanism against D-cysteine. In Klebsiella pneumoniae (strain 342), this protein is D-cysteine desulfhydrase.